We begin with the raw amino-acid sequence, 408 residues long: Argininosuccinate synthase (408 aa).

ATP contacts are provided by residues 10-18 (AYSGGLDTS) and Ala37. 2 residues coordinate L-citrulline: Tyr90 and Ser95. Residue Gly120 participates in ATP binding. Positions 122, 126, and 127 each coordinate L-aspartate. Residue Asn126 coordinates L-citrulline. Positions 130, 181, 190, 266, and 278 each coordinate L-citrulline.

The protein belongs to the argininosuccinate synthase family. Type 1 subfamily. Homotetramer.

It localises to the cytoplasm. The enzyme catalyses L-citrulline + L-aspartate + ATP = 2-(N(omega)-L-arginino)succinate + AMP + diphosphate + H(+). Its pathway is amino-acid biosynthesis; L-arginine biosynthesis; L-arginine from L-ornithine and carbamoyl phosphate: step 2/3. This is Argininosuccinate synthase from Cereibacter sphaeroides (strain ATCC 17025 / ATH 2.4.3) (Rhodobacter sphaeroides).